The chain runs to 238 residues: Protein Iojap, chloroplastic (238 aa).

The N-terminal 66 residues, 1–66 (MASSTGLTVA…KILTSLSNSR (66 aa)), are a transit peptide targeting the chloroplast.

Belongs to the Iojap/RsfS family. As to quaternary structure, interacts with chloroplast ribosomal protein uL14c (rpl14).

The protein localises to the plastid. It is found in the chloroplast. May be a ribosome silencing factor (Potential). Involved in plastid biogenesis. The polypeptide is Protein Iojap, chloroplastic (IJ) (Arabidopsis thaliana (Mouse-ear cress)).